Here is a 1050-residue protein sequence, read N- to C-terminus: Isoleucine--tRNA ligase (1050 aa).

Positions 45-56 (PYPSSPIPHIGT) match the 'HIGH' region motif. Positions 594 to 598 (EMHKS) match the 'KMSKS' region motif. Lysine 597 contacts ATP.

Belongs to the class-I aminoacyl-tRNA synthetase family. IleS type 2 subfamily. Monomer. Requires Zn(2+) as cofactor.

The protein localises to the cytoplasm. The enzyme catalyses tRNA(Ile) + L-isoleucine + ATP = L-isoleucyl-tRNA(Ile) + AMP + diphosphate. In terms of biological role, catalyzes the attachment of isoleucine to tRNA(Ile). As IleRS can inadvertently accommodate and process structurally similar amino acids such as valine, to avoid such errors it has two additional distinct tRNA(Ile)-dependent editing activities. One activity is designated as 'pretransfer' editing and involves the hydrolysis of activated Val-AMP. The other activity is designated 'posttransfer' editing and involves deacylation of mischarged Val-tRNA(Ile). The chain is Isoleucine--tRNA ligase from Sulfolobus acidocaldarius (strain ATCC 33909 / DSM 639 / JCM 8929 / NBRC 15157 / NCIMB 11770).